The chain runs to 896 residues: Translation initiation factor IF-2 (896 aa).

The segment covering 93 to 219 (VKRDPQEAER…RMAEENEKNW (127 aa)) has biased composition (basic and acidic residues). The segment at 93 to 307 (VKRDPQEAER…GSALQQGFQK (215 aa)) is disordered. Basic residues predominate over residues 256-271 (GRSRSSKAARPAKKGN). A compositionally biased stretch (basic and acidic residues) spans 272–285 (KHAESKADREEARA). The tr-type G domain occupies 395-564 (PRAPVVTIMG…LLQAEVLELK (170 aa)). The interval 404 to 411 (GHVDHGKT) is G1. 404–411 (GHVDHGKT) provides a ligand contact to GTP. The segment at 429 to 433 (GITQH) is G2. The G3 stretch occupies residues 450 to 453 (DTPG). Residues 450–454 (DTPGH) and 504–507 (NKID) contribute to the GTP site. The G4 stretch occupies residues 504-507 (NKID). The interval 540–542 (SAK) is G5.

It belongs to the TRAFAC class translation factor GTPase superfamily. Classic translation factor GTPase family. IF-2 subfamily.

It is found in the cytoplasm. In terms of biological role, one of the essential components for the initiation of protein synthesis. Protects formylmethionyl-tRNA from spontaneous hydrolysis and promotes its binding to the 30S ribosomal subunits. Also involved in the hydrolysis of GTP during the formation of the 70S ribosomal complex. In Klebsiella pneumoniae (strain 342), this protein is Translation initiation factor IF-2.